We begin with the raw amino-acid sequence, 248 residues long: 14-3-3 protein gamma-2 (248 aa).

It belongs to the 14-3-3 family. As to quaternary structure, homodimer, and heterodimer with other family members. As to expression, expressed in brain, gill, heart, intestine, kidney, liver, ovary, skeletal muscle, spleen and testis.

It localises to the cytoplasm. In terms of biological role, adapter protein implicated in the regulation of a large spectrum of both general and specialized signaling pathways. Binds to a large number of partners, usually by recognition of a phosphoserine or phosphothreonine motif. Binding generally results in the modulation of the activity of the binding partner. This is 14-3-3 protein gamma-2 from Oncorhynchus mykiss (Rainbow trout).